Here is a 452-residue protein sequence, read N- to C-terminus: UDP-glycosyltransferase 76E4 (452 aa).

UDP-alpha-D-glucose is bound by residues T274, A333–Q335, H350–E358, and Q372–Q375.

It belongs to the UDP-glycosyltransferase family.

This Arabidopsis thaliana (Mouse-ear cress) protein is UDP-glycosyltransferase 76E4 (UGT76E4).